The primary structure comprises 117 residues: Large ribosomal subunit protein uL22 (117 aa).

It belongs to the universal ribosomal protein uL22 family. As to quaternary structure, part of the 50S ribosomal subunit.

Its function is as follows. This protein binds specifically to 23S rRNA; its binding is stimulated by other ribosomal proteins, e.g. L4, L17, and L20. It is important during the early stages of 50S assembly. It makes multiple contacts with different domains of the 23S rRNA in the assembled 50S subunit and ribosome. The globular domain of the protein is located near the polypeptide exit tunnel on the outside of the subunit, while an extended beta-hairpin is found that lines the wall of the exit tunnel in the center of the 70S ribosome. This is Large ribosomal subunit protein uL22 from Lacticaseibacillus casei (strain BL23) (Lactobacillus casei).